We begin with the raw amino-acid sequence, 501 residues long: L-aspartate decarboxylase dtxS4 (501 aa).

106 to 108 contacts substrate; the sequence is KLT. Lys-320 bears the N6-(pyridoxal phosphate)lysine mark. Arg-474 lines the substrate pocket.

The protein belongs to the group II decarboxylase family. The cofactor is pyridoxal 5'-phosphate.

The enzyme catalyses L-aspartate + H(+) = beta-alanine + CO2. It participates in secondary metabolite biosynthesis. Functionally, L-aspartate decarboxylase; part of the gene cluster that mediates the biosynthesis of destruxins, insecticidal cyclic hexadepsipeptides which induce flaccid paralysis and visceral muscle contraction in insects through targeting the calcium channels and vacuolar-type ATPases. The aldo-keto reductase dtxS3 converts alpha-ketoisocaproic acid from deaminated leucine into alpha-hydroxyisocaproic acid (HIC), which is the first substrate for destruxin assembly by dtxS1. L-aspartate decarboxylase dtxS4 converts aspartic acid into beta-alanine, the last substrate for the destruxin assembly line performed by dtxS1. The nonribosomal peptide synthetase dtxS1 synthesizes destruxins B and B2, whereas the cytochrome P450 monooxygenase dtxS2 is required to convert destruxin B into other destruxin derivatives, including destructins C, D, A and E. Destruxin E-diol (ED) is further produced in a non-enzymatic manner from destruxin E. Destruxins play an important role in virulence and escape from insect host immune defenses. The sequence is that of L-aspartate decarboxylase dtxS4 from Metarhizium robertsii (strain ARSEF 23 / ATCC MYA-3075) (Metarhizium anisopliae (strain ARSEF 23)).